A 723-amino-acid chain; its full sequence is Tripartite motif-containing protein 42 (723 aa).

The RING-type zinc finger occupies 146–192; sequence CPMCSRLRLHSFMLPCNHSLCEKCLRQLQKHAEVTENFFILICPVCD. B box-type zinc fingers lie at residues 235-280 and 285-326; these read PILC…FVDT and QDEK…TISL. Residues Cys290, His293, Cys313, and His318 each contribute to the Zn(2+) site. Residues 382-407 are a coiled coil; that stretch reads KLRSILQEKEKIIMEQIENLEVSRQK. The COS domain occupies 434–492; it reads LKETGQVAFLQSAKILVDQIEDGIQTTYRPDPQLRLHSINYVPLDFVELSSAIHELFPT. Residues 603-701 form the Fibronectin type-III domain; that stretch reads TPGPIVIYQT…DICKVVTPDG (99 aa).

It belongs to the TRIM/RBCC family.

In Homo sapiens (Human), this protein is Tripartite motif-containing protein 42 (TRIM42).